The following is a 524-amino-acid chain: Excitatory amino acid transporter 3 (524 aa).

Over Met1–Asn18 the chain is Cytoplasmic. The chain crosses the membrane as a helical span at residues Trp19 to Val38. At Arg39–Arg61 the chain is on the extracellular side. N-linked (GlcNAc...) asparagine glycosylation occurs at Asn43. A helical transmembrane segment spans residues Met62 to Leu82. Over Asp83–Arg93 the chain is Cytoplasmic. A helical transmembrane segment spans residues Ala94–Val114. Tyr98, Thr101, and Thr102 together coordinate Na(+). The Extracellular segment spans residues Ser115–Met205. 2 N-linked (GlcNAc...) asparagine glycosylation sites follow: Asn178 and Asn195. The helical transmembrane segment at Tyr206–Met229 threads the bilayer. Residues Gly230–Asp238 are Cytoplasmic-facing. Residues Phe239–Ile266 form a helical membrane-spanning segment. The Extracellular portion of the chain corresponds to Ala267–Met286. Residues Ala287–Val308 form a helical membrane-spanning segment. Residues Val309–Pro313 are Cytoplasmic-facing. An intramembrane region (discontinuously helical) is located at residues Phe314 to Ala344. L-aspartate contacts are provided by Ser331 and Ser333. At Glu345 to Arg353 the chain is on the cytoplasmic side. A helical membrane pass occupies residues Ile354–Phe380. Na(+)-binding residues include Gly362, Thr364, Asn366, and Asp368. An L-aspartate-binding site is contributed by Thr370. At Ile381 to Gln393 the chain is on the extracellular side. Positions Ile394 to Gly427 form an intramembrane region, discontinuously helical. Na(+) is bound by residues Ser405, Ile406, and Ala408. Val411 is a binding site for L-aspartate. Residues Leu428–Asp440 are Extracellular-facing. A helical membrane pass occupies residues Trp441–Val462. The L-aspartate site is built by Arg447, Thr448, and Asn451. 2 residues coordinate Na(+): Asn451 and Asp455. The Cytoplasmic portion of the chain corresponds to Glu463–Phe524. Phosphoserine is present on residues Ser517 and Ser522.

It belongs to the dicarboxylate/amino acid:cation symporter (DAACS) (TC 2.A.23) family. SLC1A1 subfamily. As to quaternary structure, homotrimer. Interacts with ARL6IP5. Interacts with RTN2 (via N-terminus); the interaction promotes cell surface expression of SLC1A1. Interacts with SORCS2; this interaction is important for normal expression at the cell membrane. In terms of processing, glycosylated. In terms of tissue distribution, expressed in all tissues tested including liver, muscle, testis, ovary, retinoblastoma cell line, neurons and brain (in which there was dense expression in substantia nigra, red nucleus, hippocampus and in cerebral cortical layers).

It is found in the cell membrane. The protein resides in the apical cell membrane. Its subcellular location is the synapse. The protein localises to the synaptosome. It localises to the early endosome membrane. It is found in the late endosome membrane. The protein resides in the recycling endosome membrane. It catalyses the reaction K(+)(in) + L-glutamate(out) + 3 Na(+)(out) + H(+)(out) = K(+)(out) + L-glutamate(in) + 3 Na(+)(in) + H(+)(in). The enzyme catalyses K(+)(in) + L-aspartate(out) + 3 Na(+)(out) + H(+)(out) = K(+)(out) + L-aspartate(in) + 3 Na(+)(in) + H(+)(in). It carries out the reaction D-aspartate(out) + K(+)(in) + 3 Na(+)(out) + H(+)(out) = D-aspartate(in) + K(+)(out) + 3 Na(+)(in) + H(+)(in). The catalysed reaction is K(+)(in) + L-cysteine(out) + 3 Na(+)(out) + H(+)(out) = K(+)(out) + L-cysteine(in) + 3 Na(+)(in) + H(+)(in). In terms of biological role, sodium-dependent, high-affinity amino acid transporter that mediates the uptake of L-glutamate and also L-aspartate and D-aspartate. Can also transport L-cysteine. Functions as a symporter that transports one amino acid molecule together with two or three Na(+) ions and one proton, in parallel with the counter-transport of one K(+) ion. Mediates Cl(-) flux that is not coupled to amino acid transport; this avoids the accumulation of negative charges due to aspartate and Na(+) symport. Plays an important role in L-glutamate and L-aspartate reabsorption in renal tubuli. Plays a redundant role in the rapid removal of released glutamate from the synaptic cleft, which is essential for terminating the postsynaptic action of glutamate. Contributes to glutathione biosynthesis and protection against oxidative stress via its role in L-glutamate and L-cysteine transport. Negatively regulated by ARL6IP5. This is Excitatory amino acid transporter 3 from Homo sapiens (Human).